We begin with the raw amino-acid sequence, 299 residues long: Homoserine kinase (299 aa).

88 to 98 (PLGRGLGSSAT) contacts ATP.

It belongs to the GHMP kinase family. Homoserine kinase subfamily.

It is found in the cytoplasm. The enzyme catalyses L-homoserine + ATP = O-phospho-L-homoserine + ADP + H(+). It participates in amino-acid biosynthesis; L-threonine biosynthesis; L-threonine from L-aspartate: step 4/5. Catalyzes the ATP-dependent phosphorylation of L-homoserine to L-homoserine phosphate. In Gloeobacter violaceus (strain ATCC 29082 / PCC 7421), this protein is Homoserine kinase.